The primary structure comprises 471 residues: 8-amino-7-oxononanoate synthase (471 aa).

Position 40 (R40) interacts with substrate. 131–132 lines the pyridoxal 5'-phosphate pocket; the sequence is GY. H156 contacts substrate. Positions 202, 230, and 258 each coordinate pyridoxal 5'-phosphate. An N6-(pyridoxal phosphate)lysine modification is found at K261. Substrate is bound at residue T377. The tract at residues 409–471 is disordered; the sequence is SEGQTRREAE…LGAARRETAA (63 aa).

This sequence belongs to the class-II pyridoxal-phosphate-dependent aminotransferase family. BioF subfamily. In terms of assembly, homodimer. Pyridoxal 5'-phosphate serves as cofactor.

It catalyses the reaction 6-carboxyhexanoyl-[ACP] + L-alanine + H(+) = (8S)-8-amino-7-oxononanoate + holo-[ACP] + CO2. It functions in the pathway cofactor biosynthesis; biotin biosynthesis. Catalyzes the decarboxylative condensation of pimeloyl-[acyl-carrier protein] and L-alanine to produce 8-amino-7-oxononanoate (AON), [acyl-carrier protein], and carbon dioxide. This Burkholderia ambifaria (strain ATCC BAA-244 / DSM 16087 / CCUG 44356 / LMG 19182 / AMMD) (Burkholderia cepacia (strain AMMD)) protein is 8-amino-7-oxononanoate synthase.